The sequence spans 235 residues: Segregation and condensation protein A (235 aa).

The protein belongs to the ScpA family. In terms of assembly, component of a cohesin-like complex composed of ScpA, ScpB and the Smc homodimer, in which ScpA and ScpB bind to the head domain of Smc. The presence of the three proteins is required for the association of the complex with DNA.

The protein resides in the cytoplasm. Functionally, participates in chromosomal partition during cell division. May act via the formation of a condensin-like complex containing Smc and ScpB that pull DNA away from mid-cell into both cell halves. The polypeptide is Segregation and condensation protein A (Streptococcus agalactiae serotype Ia (strain ATCC 27591 / A909 / CDC SS700)).